The primary structure comprises 400 residues: Lipid-A-disaccharide synthase (400 aa).

The protein belongs to the LpxB family.

It carries out the reaction a lipid X + a UDP-2-N,3-O-bis[(3R)-3-hydroxyacyl]-alpha-D-glucosamine = a lipid A disaccharide + UDP + H(+). It functions in the pathway bacterial outer membrane biogenesis; LPS lipid A biosynthesis. Its function is as follows. Condensation of UDP-2,3-diacylglucosamine and 2,3-diacylglucosamine-1-phosphate to form lipid A disaccharide, a precursor of lipid A, a phosphorylated glycolipid that anchors the lipopolysaccharide to the outer membrane of the cell. The protein is Lipid-A-disaccharide synthase of Acidobacterium capsulatum (strain ATCC 51196 / DSM 11244 / BCRC 80197 / JCM 7670 / NBRC 15755 / NCIMB 13165 / 161).